We begin with the raw amino-acid sequence, 154 residues long: MSKIKIFHLFPDDKDIEATQQPESLLVPSKSDSLDSSLSRHHQENQSNRQRNHQHRQQDQELENLQDGSRGKRKWECKDEESPVKIPETPRNSNSVCYCPPRPPRKPKAIPSMKRRGMWVKRSVVFLDVAREVESMFPPSVLQDFGKKIKKARF.

The tract at residues 1–111 (MSKIKIFHLF…RPPRKPKAIP (111 aa)) is disordered. The span at 24 to 37 (SLLVPSKSDSLDSS) shows a compositional bias: low complexity. A compositionally biased stretch (basic and acidic residues) spans 74 to 83 (KWECKDEESP).

Probable cyclin-dependent protein kinase (CDK) inhibitor that functions as a repressor of mitosis in the endoreduplication cell cycle. This chain is Cyclin-dependent protein kinase inhibitor SMR14, found in Arabidopsis thaliana (Mouse-ear cress).